Consider the following 134-residue polypeptide: Rhoptry antigen protein (134 aa).

Disordered stretches follow at residues 21–82 and 96–134; these read MGPL…SNLK and QLDK…ENEL. The span at 29-38 shows a compositional bias: polar residues; it reads KSTSAASTSD. Over residues 39–54 the composition is skewed to low complexity; sequence ELSGSEGPSTESTSTG. Basic and acidic residues predominate over residues 57-69; it reads GEDKTTDNTYKEM. Residues 102-113 are compositionally biased toward basic residues; that stretch reads PKKKKSKRKKKR. Residues 114–126 are compositionally biased toward basic and acidic residues; the sequence is DSSSDRILLEESK.

In Plasmodium falciparum, this protein is Rhoptry antigen protein.